Consider the following 157-residue polypeptide: Endoribonuclease YbeY (157 aa).

The Zn(2+) site is built by His111, His115, and His121.

This sequence belongs to the endoribonuclease YbeY family. Zn(2+) is required as a cofactor.

Its subcellular location is the cytoplasm. In terms of biological role, single strand-specific metallo-endoribonuclease involved in late-stage 70S ribosome quality control and in maturation of the 3' terminus of the 16S rRNA. This Pseudomonas entomophila (strain L48) protein is Endoribonuclease YbeY.